The sequence spans 161 residues: Efficient mitochondria targeting-associated protein 19 (161 aa).

Residues 1–10 (MKLGHREQQF) are Cytoplasmic-facing. The EXPERA domain maps to 7 to 159 (EQQFYLWYFI…PTFLIPLRLC (153 aa)). The helical transmembrane segment at 11–31 (YLWYFIVHIPITIFIDSSVVI) threads the bilayer. Topologically, residues 32–61 (PAKWQLGIAQKVVSDHIAKQHDFLLSEKPE) are lumenal. Residues 62 to 82 (WLYWFVVLELVLQLPLFVYFV) form a helical membrane-spanning segment. Residues 83-101 (NKFWNSSELQVNTNSRLKK) lie on the Cytoplasmic side of the membrane. A helical transmembrane segment spans residues 102–122 (WLRIYGWNASLTTLICIVVIF). The Lumenal portion of the chain corresponds to 123–141 (KRGYIPYDVLKTSLSMTQK). A helical transmembrane segment spans residues 142–160 (CQLASVYLPTFLIPLRLCF). Residue valine 161 is a topological domain, cytoplasmic.

The protein belongs to the TMEM97/sigma-2 receptor family.

It localises to the endoplasmic reticulum membrane. Part of an import route for newly synthesized mitochondrial proteins termed the ER-SURF pathway (ER surface-mediated protein targeting), which retrieves mitochondrial precursor proteins from the ER surface and reroutes them to mitochondria for efficient mitochondrial import. Acts as a quality control factor in the ER, promoting the proteolytic degradation of nonproductive and extramitochondrial precursor proteins in the ER membrane thus removing them from the ER surface. The chain is Efficient mitochondria targeting-associated protein 19 from Saccharomyces cerevisiae (strain ATCC 204508 / S288c) (Baker's yeast).